Here is a 470-residue protein sequence, read N- to C-terminus: Pre-mycofactocin glycosyltransferase (470 aa).

A helical transmembrane segment spans residues 315–335 (LVISGGALMAWILMSIGTGLG).

The protein belongs to the glycosyltransferase 2 family.

Its subcellular location is the cell membrane. Its function is as follows. Involved in the biosynthesis of the enzyme cofactor mycofactocin (MFT). Acts as a glycosyltransferase that catalyzes the oligoglycosylation of pre-mycofactocin (PMFT), adding up to nine beta-1,4-linked glucose residues. Is required for the in vivo ethanol assimilation in M.smegmatis. The polypeptide is Pre-mycofactocin glycosyltransferase (mftF) (Mycobacterium tuberculosis (strain CDC 1551 / Oshkosh)).